We begin with the raw amino-acid sequence, 497 residues long: UDP-N-acetylmuramoyl-L-alanyl-D-glutamate--2,6-diaminopimelate ligase (497 aa).

Ser32 lines the UDP-N-acetyl-alpha-D-muramoyl-L-alanyl-D-glutamate pocket. 113–119 (GTNGKTT) is an ATP binding site. Residues 155-156 (TT), Ser182, Gln188, and Arg190 contribute to the UDP-N-acetyl-alpha-D-muramoyl-L-alanyl-D-glutamate site. Lys222 bears the N6-carboxylysine mark. Meso-2,6-diaminopimelate is bound by residues Arg385, 409 to 412 (DNPR), Gly460, and Glu464. Residues 409 to 412 (DNPR) carry the Meso-diaminopimelate recognition motif motif.

The protein belongs to the MurCDEF family. MurE subfamily. Mg(2+) serves as cofactor. Carboxylation is probably crucial for Mg(2+) binding and, consequently, for the gamma-phosphate positioning of ATP.

The protein localises to the cytoplasm. It catalyses the reaction UDP-N-acetyl-alpha-D-muramoyl-L-alanyl-D-glutamate + meso-2,6-diaminopimelate + ATP = UDP-N-acetyl-alpha-D-muramoyl-L-alanyl-gamma-D-glutamyl-meso-2,6-diaminopimelate + ADP + phosphate + H(+). The protein operates within cell wall biogenesis; peptidoglycan biosynthesis. Functionally, catalyzes the addition of meso-diaminopimelic acid to the nucleotide precursor UDP-N-acetylmuramoyl-L-alanyl-D-glutamate (UMAG) in the biosynthesis of bacterial cell-wall peptidoglycan. This Thermosynechococcus vestitus (strain NIES-2133 / IAM M-273 / BP-1) protein is UDP-N-acetylmuramoyl-L-alanyl-D-glutamate--2,6-diaminopimelate ligase.